Reading from the N-terminus, the 252-residue chain is Type II secretion system protein N (252 aa).

Topologically, residues 1 to 4 (MKRA) are cytoplasmic. The helical transmembrane segment at 5 to 25 (VGYGLLFSTVLMTSVVVHLPA) threads the bilayer. At 26-252 (QVALSPLPLP…RYPFNQQGQL (227 aa)) the chain is on the periplasmic side.

It belongs to the GSP N family.

The protein localises to the cell inner membrane. Functionally, involved in a type II secretion system (T2SS, formerly general secretion pathway, GSP) for the export of proteins. Required for secretion of cholera toxin through the outer membrane. The polypeptide is Type II secretion system protein N (epsN) (Vibrio cholerae serotype O1 (strain ATCC 39315 / El Tor Inaba N16961)).